The chain runs to 427 residues: Flavohemoprotein (427 aa).

The Globin domain maps to 30-168 (ELNESQKQYI…LAKILIDSEK (139 aa)). H114 contacts heme b. Active-site charge relay system residues include Y124 and E167. Residues 176–427 (WNGFVEFKVT…QSEFFGPYIP (252 aa)) are reductase. An FAD-binding FR-type domain is found at 177 to 285 (NGFVEFKVTE…SPPAGNFVYK (109 aa)). FAD-binding positions include Y216 and 232–235 (REYS). Residue 301 to 306 (GIGITP) participates in NADP(+) binding. 421-424 (FFGP) lines the FAD pocket.

The protein belongs to the globin family. Two-domain flavohemoproteins subfamily. In the C-terminal section; belongs to the flavoprotein pyridine nucleotide cytochrome reductase family. It depends on FAD as a cofactor. Heme b serves as cofactor.

It is found in the cytoplasm. The protein resides in the nucleus. The catalysed reaction is 2 nitric oxide + NADPH + 2 O2 = 2 nitrate + NADP(+) + H(+). It carries out the reaction 2 nitric oxide + NADH + 2 O2 = 2 nitrate + NAD(+) + H(+). In terms of biological role, is involved in NO detoxification in an aerobic process, termed nitric oxide dioxygenase (NOD) reaction that utilizes O(2) and NAD(P)H to convert NO to nitrate, which protects the fungus from various noxious nitrogen compounds. Therefore, plays a central role in the inducible response to nitrosative stress. Functionally, in the presence of oxygen and NADH, it has NADH oxidase activity, which leads to the generation of superoxide and H(2)O(2). Under anaerobic conditions, it also exhibits nitric oxide reductase and FAD reductase activities. However, all these reactions are much lower than NOD activity. In Schizosaccharomyces pombe (strain 972 / ATCC 24843) (Fission yeast), this protein is Flavohemoprotein.